The primary structure comprises 895 residues: Zyg eleven-related protein 1 (895 aa).

Disordered regions lie at residues 58–78 (HGPA…PDQG) and 195–221 (RGQM…SDHQ). Residues 205 to 220 (SPLSPSSQPSSIQSDH) show a composition bias toward low complexity.

Interacts with elc-1. Part of an E3 ubiquitin ligase complex including zer-11, cul-2 and elc-1.

Functionally, acts as a target recruitment subunit in the E3 ubiquitin ligase complex zer-1-cul-2-elc-1. This chain is Zyg eleven-related protein 1 (zer-1), found in Caenorhabditis elegans.